A 266-amino-acid chain; its full sequence is Glucosamine-6-phosphate deaminase (266 aa).

Asp72 functions as the Proton acceptor; for enolization step in the catalytic mechanism. Catalysis depends on Asp141, which acts as the For ring-opening step. His143 acts as the Proton acceptor; for ring-opening step in catalysis. Catalysis depends on Glu148, which acts as the For ring-opening step.

It belongs to the glucosamine/galactosamine-6-phosphate isomerase family. NagB subfamily. Homohexamer.

The catalysed reaction is alpha-D-glucosamine 6-phosphate + H2O = beta-D-fructose 6-phosphate + NH4(+). Its pathway is amino-sugar metabolism; N-acetylneuraminate degradation; D-fructose 6-phosphate from N-acetylneuraminate: step 5/5. Its activity is regulated as follows. Allosterically activated by N-acetylglucosamine 6-phosphate (GlcNAc6P). In terms of biological role, catalyzes the reversible isomerization-deamination of glucosamine 6-phosphate (GlcN6P) to form fructose 6-phosphate (Fru6P) and ammonium ion. This is Glucosamine-6-phosphate deaminase from Yersinia enterocolitica serotype O:8 / biotype 1B (strain NCTC 13174 / 8081).